A 232-amino-acid polypeptide reads, in one-letter code: tRNA (guanine-N(1)-)-methyltransferase (232 aa).

Residues Gly111 and 131 to 136 (IGDYIL) contribute to the S-adenosyl-L-methionine site.

It belongs to the RNA methyltransferase TrmD family. In terms of assembly, homodimer.

Its subcellular location is the cytoplasm. The enzyme catalyses guanosine(37) in tRNA + S-adenosyl-L-methionine = N(1)-methylguanosine(37) in tRNA + S-adenosyl-L-homocysteine + H(+). Specifically methylates guanosine-37 in various tRNAs. This is tRNA (guanine-N(1)-)-methyltransferase from Bartonella henselae (strain ATCC 49882 / DSM 28221 / CCUG 30454 / Houston 1) (Rochalimaea henselae).